Consider the following 400-residue polypeptide: UDP-glucuronate:glycolipid 2-beta-glucuronosyltransferase (400 aa).

Aspartate 157 (proton acceptor) is an active-site residue. Residues 230–231 (SM), 272–273 (EM), tyrosine 292, and 306–310 (MKLLQ) contribute to the UDP-alpha-D-glucuronate site. The segment at 377-400 (PETRLYPHPPTAAPQLSSEAALSH) is disordered. The segment covering 390–400 (PQLSSEAALSH) has biased composition (polar residues).

This sequence belongs to the glycosyltransferase 70 family.

Its subcellular location is the cell inner membrane. The catalysed reaction is alpha-D-Man-(1-&gt;3)-beta-D-Glc-(1-&gt;4)-alpha-D-Glc-1-di-trans,octa-cis-undecaprenyl diphosphate + UDP-alpha-D-glucuronate = beta-D-GlcA-(1-&gt;2)-alpha-D-Man-(1-&gt;3)-beta-D-Glc-(1-&gt;4)-alpha-D-Glc-di-trans,octa-cis-undecaprenyl diphosphate + UDP + H(+). Its pathway is glycan biosynthesis; xanthan biosynthesis. In terms of biological role, catalyzes the transfer of a glucuronic acid (GlcA) residue from UDP-glucuronate to mannose-alpha-1,3-glucose-beta-1,4-glucose-P-P-polyisoprenyl to form the lipid-linked tetrasaccharide GlcA-Man-Glc(2)-PP-Pol, with a glucuronic acid-beta-mannose linkage. Is involved in the biosynthesis of the exopolysaccharide xanthan, since it catalyzes the fourth glycosylation step in the assembly of the pentasaccharide-P-P-polyisoprenyl repeating unit of xanthan. Is unable to use the trisaccharide acceptor freed from the pyrophosphate lipid moiety. Does not show specificity for the lipidic portion of the acceptor. Shows diminished activity when tested with 6-O-acetyl-mannose-alpha-1,3-glucose-beta-1,4-glucose-P-P-polyisoprenyl, a putative intermediate in the synthesis of xanthan; this could indicate that acetylation of the internal mannose takes place after the formation of the GumK product. This chain is UDP-glucuronate:glycolipid 2-beta-glucuronosyltransferase (gumK), found in Xanthomonas campestris pv. campestris.